Here is a 730-residue protein sequence, read N- to C-terminus: Heterogeneous nuclear ribonucleoprotein M (730 aa).

Over residues 1 to 13 (MAAGVEAAAEVAA) the composition is skewed to low complexity. Residues 1–62 (MAAGVEAAAE…NIKRGGNRFE (62 aa)) form a disordered region. Alanine 2 carries the N-acetylalanine modification. Residue lysine 17 forms a Glycyl lysine isopeptide (Lys-Gly) (interchain with G-Cter in SUMO2) linkage. Serine 29 carries the phosphoserine modification. Lysine 37 is covalently cross-linked (Glycyl lysine isopeptide (Lys-Gly) (interchain with G-Cter in SUMO2)). The segment covering 38–50 (GEGERPAQNEKRK) has biased composition (basic and acidic residues). Glycyl lysine isopeptide (Lys-Gly) (interchain with G-Cter in SUMO2) cross-links involve residues lysine 69 and lysine 83. 2 consecutive RRM domains span residues 71 to 149 (YRAF…EDPD) and 204 to 281 (STVF…MDER). A Phosphoserine modification is found at serine 86. Residues lysine 88 and lysine 127 each participate in a glycyl lysine isopeptide (Lys-Gly) (interchain with G-Cter in SUMO2) cross-link. Residue lysine 134 is modified to N6-acetyllysine; alternate. Residue lysine 134 forms a Glycyl lysine isopeptide (Lys-Gly) (interchain with G-Cter in SUMO2); alternate linkage. Glycyl lysine isopeptide (Lys-Gly) (interchain with G-Cter in SUMO2) cross-links involve residues lysine 143 and lysine 145. Serine 204 carries the phosphoserine modification. Lysine 221 is covalently cross-linked (Glycyl lysine isopeptide (Lys-Gly) (interchain with G-Cter in SUMO2)). At lysine 277 the chain carries N6-acetyllysine; alternate. Residue lysine 277 forms a Glycyl lysine isopeptide (Lys-Gly) (interchain with G-Cter in SUMO2); alternate linkage. Residues lysine 285 and lysine 345 each participate in a glycyl lysine isopeptide (Lys-Gly) (interchain with G-Cter in SUMO2) cross-link. Residues serine 365 and serine 377 each carry the phosphoserine modification. Glycyl lysine isopeptide (Lys-Gly) (interchain with G-Cter in SUMO2) cross-links involve residues lysine 381 and lysine 388. Serine 397 bears the Phosphoserine mark. Repeat copies occupy residues 400-405 (GIERMG), 407-412 (GIDRLG), 415-420 (GMERMG), and 426-431 (GMDRVG). Positions 400–608 (GIERMGPGID…ALGAGIERMG (209 aa)) are 27 X 6 AA repeats of [GEVSTPAN]-[ILMV]-[DE]-[RH]-[MLVI]-[GAV]. The residue at position 432 (serine 432) is a Phosphoserine. 3 repeat units span residues 433-438 (EIERMG), 440-445 (VMDRMG), and 446-451 (SVERMG). Serine 452 bears the Phosphoserine mark. Repeat copies occupy residues 453-458 (GIERMG), 461-466 (GLDHMA), 468-473 (SIERMG), and 475-480 (TMERIG). Position 468 is a phosphoserine (serine 468). Position 481 is a phosphoserine (serine 481). Tandem repeats lie at residues 482–487 (GVERMG), 493–498 (GLERMA), 500–505 (PIDRVG), 507–512 (TIERMG), 514–519 (GVERMG), 521–526 (AIERMG), 528–533 (SMERMV), 540–545 (GLERMG), 547–552 (VMDRMA), 554–559 (GLERMG), 562–566 (NLERM), 567–572 (GLERMG), 575–579 (SLERM), 580–585 (GLERMG), 588–593 (SLERMG), and 603–608 (GIERMG). Position 496 is an omega-N-methylarginine (arginine 496). Serine 528 bears the Phosphoserine mark. Serine 575 bears the Phosphoserine mark. Serine 588 carries the phosphoserine modification. Phosphoserine is present on residues serine 618, serine 633, and serine 637. A Glycyl lysine isopeptide (Lys-Gly) (interchain with G-Cter in SUMO2) cross-link involves residue lysine 651. The region spanning 653 to 729 (CQIFVRNLPF…REIDVRIDRN (77 aa)) is the RRM 3 domain. Threonine 665 bears the Phosphothreonine mark. Lysine 667 participates in a covalent cross-link: Glycyl lysine isopeptide (Lys-Gly) (interchain with G-Cter in SUMO2). Lysine 672 carries the post-translational modification N6-acetyllysine. Residues lysine 685 and lysine 692 each participate in a glycyl lysine isopeptide (Lys-Gly) (interchain with G-Cter in SUMO2) cross-link. Lysine 698 carries the N6-acetyllysine; alternate modification. Lysine 698 participates in a covalent cross-link: Glycyl lysine isopeptide (Lys-Gly) (interchain with G-Cter in SUMO2); alternate. A Glycyl lysine isopeptide (Lys-Gly) (interchain with G-Cter in SUMO1); alternate cross-link involves residue lysine 698. Serine 701 bears the Phosphoserine mark. Residue lysine 716 forms a Glycyl lysine isopeptide (Lys-Gly) (interchain with G-Cter in SUMO2) linkage.

Identified in the spliceosome C complex. Interacts with PPIA/CYPA. In terms of processing, sumoylated.

The protein resides in the nucleus. It is found in the nucleolus. Its function is as follows. Pre-mRNA binding protein in vivo, binds avidly to poly(G) and poly(U) RNA homopolymers in vitro. Involved in splicing. Acts as a receptor for carcinoembryonic antigen in Kupffer cells, may initiate a series of signaling events leading to tyrosine phosphorylation of proteins and induction of IL-1 alpha, IL-6, IL-10 and tumor necrosis factor alpha cytokines. The sequence is that of Heterogeneous nuclear ribonucleoprotein M (HNRNPM) from Homo sapiens (Human).